Reading from the N-terminus, the 162-residue chain is Cyclic pyranopterin monophosphate synthase (162 aa).

Substrate-binding positions include leucine 75–histidine 77 and methionine 113–glutamate 114. Aspartate 128 is an active-site residue.

Belongs to the MoaC family. Homohexamer; trimer of dimers.

It carries out the reaction (8S)-3',8-cyclo-7,8-dihydroguanosine 5'-triphosphate = cyclic pyranopterin phosphate + diphosphate. Its pathway is cofactor biosynthesis; molybdopterin biosynthesis. In terms of biological role, catalyzes the conversion of (8S)-3',8-cyclo-7,8-dihydroguanosine 5'-triphosphate to cyclic pyranopterin monophosphate (cPMP). This is Cyclic pyranopterin monophosphate synthase from Burkholderia cenocepacia (strain ATCC BAA-245 / DSM 16553 / LMG 16656 / NCTC 13227 / J2315 / CF5610) (Burkholderia cepacia (strain J2315)).